A 159-amino-acid polypeptide reads, in one-letter code: ATP synthase subunit b (159 aa).

Residues 4–24 traverse the membrane as a helical segment; sequence VGINGTLIVQLVTFVILVALL.

Belongs to the ATPase B chain family. F-type ATPases have 2 components, F(1) - the catalytic core - and F(0) - the membrane proton channel. F(1) has five subunits: alpha(3), beta(3), gamma(1), delta(1), epsilon(1). F(0) has three main subunits: a(1), b(2) and c(10-14). The alpha and beta chains form an alternating ring which encloses part of the gamma chain. F(1) is attached to F(0) by a central stalk formed by the gamma and epsilon chains, while a peripheral stalk is formed by the delta and b chains.

The protein resides in the cell inner membrane. Its function is as follows. F(1)F(0) ATP synthase produces ATP from ADP in the presence of a proton or sodium gradient. F-type ATPases consist of two structural domains, F(1) containing the extramembraneous catalytic core and F(0) containing the membrane proton channel, linked together by a central stalk and a peripheral stalk. During catalysis, ATP synthesis in the catalytic domain of F(1) is coupled via a rotary mechanism of the central stalk subunits to proton translocation. Functionally, component of the F(0) channel, it forms part of the peripheral stalk, linking F(1) to F(0). This chain is ATP synthase subunit b, found in Acidithiobacillus ferridurans.